Here is a 466-residue protein sequence, read N- to C-terminus: Asparagine--tRNA ligase (466 aa).

This sequence belongs to the class-II aminoacyl-tRNA synthetase family. As to quaternary structure, homodimer.

It is found in the cytoplasm. It catalyses the reaction tRNA(Asn) + L-asparagine + ATP = L-asparaginyl-tRNA(Asn) + AMP + diphosphate + H(+). The sequence is that of Asparagine--tRNA ligase from Sodalis glossinidius (strain morsitans).